The chain runs to 257 residues: Probable ssDNA-binding protein (257 aa).

The tract at residues 222 to 257 (AFMEGRENKDDDAKSGNSNAGSQKGIDQEAASDLDD) is disordered. The segment covering 225-235 (EGRENKDDDAK) has biased composition (basic and acidic residues).

Its function is as follows. Required during DNA replication. Displaced viral DNA strands are transiently coated with the ssDNA-binding protein. It is then probably removed by the replisome that performs lagging strand synthesis or during the events that lead up to the recombination process. The polypeptide is Probable ssDNA-binding protein (D11) (Escherichia phage T5 (Enterobacteria phage T5)).